The primary structure comprises 304 residues: Release factor glutamine methyltransferase (304 aa).

The S-adenosyl-L-methionine site is built by Asp-144 and Asn-188. Substrate is bound at residue 188–191 (NPPY).

It belongs to the protein N5-glutamine methyltransferase family. PrmC subfamily.

The enzyme catalyses L-glutaminyl-[peptide chain release factor] + S-adenosyl-L-methionine = N(5)-methyl-L-glutaminyl-[peptide chain release factor] + S-adenosyl-L-homocysteine + H(+). Functionally, methylates the class 1 translation termination release factors RF1/PrfA and RF2/PrfB on the glutamine residue of the universally conserved GGQ motif. This chain is Release factor glutamine methyltransferase, found in Mycobacterium tuberculosis (strain ATCC 25618 / H37Rv).